We begin with the raw amino-acid sequence, 389 residues long: Probable inactive purple acid phosphatase 29 (389 aa).

An N-terminal signal peptide occupies residues 1–34 (MADNRRRRSLFDFLLFSVFLGLACLCLSPIPATA). An N-linked (GlcNAc...) asparagine glycan is attached at asparagine 80. Asparagine 136 lines the substrate pocket. A Zn(2+)-binding site is contributed by asparagine 136. 2 N-linked (GlcNAc...) asparagine glycosylation sites follow: asparagine 191 and asparagine 267. Histidine 303 contributes to the Zn(2+) binding site. 303-305 (HDH) is a substrate binding site. Histidine 305 is a Fe cation binding site. A glycan (N-linked (GlcNAc...) asparagine) is linked at asparagine 380.

This sequence belongs to the metallophosphoesterase superfamily. Purple acid phosphatase family. In terms of assembly, homodimer. It depends on Fe cation as a cofactor. Requires Zn(2+) as cofactor. In terms of tissue distribution, expressed in roots, stems, leaves, flowers and siliques.

It is found in the secreted. The chain is Probable inactive purple acid phosphatase 29 (PAP29) from Arabidopsis thaliana (Mouse-ear cress).